A 289-amino-acid chain; its full sequence is Cell division protein ZipA (289 aa).

Position 1 (Met-1) is a topological domain, periplasmic. The helical transmembrane segment at 2 to 22 (DIGLREWLIVIGLIVIAGILF) threads the bilayer. The Cytoplasmic segment spans residues 23–289 (DGWRRMRGGK…HERRSLMQKR (267 aa)). The interval 66-141 (REPSFDEQDL…KEREKAPAVA (76 aa)) is disordered. Residues 81 to 99 (REAKERKGGKRQEEPRQGD) show a composition bias toward basic and acidic residues. The span at 100-114 (LDLDEGLALEADPSD) shows a compositional bias: acidic residues.

It belongs to the ZipA family. Interacts with FtsZ via their C-terminal domains.

The protein resides in the cell inner membrane. Functionally, essential cell division protein that stabilizes the FtsZ protofilaments by cross-linking them and that serves as a cytoplasmic membrane anchor for the Z ring. Also required for the recruitment to the septal ring of downstream cell division proteins. This Pseudomonas aeruginosa (strain LESB58) protein is Cell division protein ZipA.